A 31-amino-acid polypeptide reads, in one-letter code: uncharacterized protein (31 aa).

A disordered region spans residues 1 to 31 (MKKLERMSEVSQMCSEAKKNRKRMSVVSSVA).

This is an uncharacterized protein from Sulfolobus islandicus filamentous virus (isolate Iceland/Hveragerdi) (SIFV).